The primary structure comprises 264 residues: MENYSSLLIGGKQFSSRLMVGTGKYKSTQDMVASLSNSETEIITVAVRRIKNDQTGENLLEKINWEKYWMLPNTAGCVNSDEAVRIAILGRELAKLSGQEENNFVKLEVIPDKKYLLPDPIETLKAAEILIKKGFAVLPYINADPILAKRLEEIGCATVMPLGSPIGSGQGLLNLSNIRIIIENSKVPVIIDAGIGVPSEASQAMEIGADGVLINSAIAQAANPPLMAQAINYSVKAGRQAFLAGRIKKQDFAVASSPEKNISI.

The Schiff-base intermediate with DXP role is filled by Lys-106. Residues Gly-167, 193-194, and 215-216 each bind 1-deoxy-D-xylulose 5-phosphate; these read AG and NS.

The protein belongs to the ThiG family. Homotetramer. Forms heterodimers with either ThiH or ThiS.

It is found in the cytoplasm. It carries out the reaction [ThiS sulfur-carrier protein]-C-terminal-Gly-aminoethanethioate + 2-iminoacetate + 1-deoxy-D-xylulose 5-phosphate = [ThiS sulfur-carrier protein]-C-terminal Gly-Gly + 2-[(2R,5Z)-2-carboxy-4-methylthiazol-5(2H)-ylidene]ethyl phosphate + 2 H2O + H(+). It functions in the pathway cofactor biosynthesis; thiamine diphosphate biosynthesis. Its function is as follows. Catalyzes the rearrangement of 1-deoxy-D-xylulose 5-phosphate (DXP) to produce the thiazole phosphate moiety of thiamine. Sulfur is provided by the thiocarboxylate moiety of the carrier protein ThiS. In vitro, sulfur can be provided by H(2)S. In Prochlorococcus marinus (strain AS9601), this protein is Thiazole synthase.